A 421-amino-acid chain; its full sequence is Anhydromevalonate phosphate decarboxylase (421 aa).

Mn(2+) contacts are provided by N131 and E194. The active-site Proton acceptor is D240.

The protein belongs to the UbiD family. Requires prenylated FMN as cofactor. Mn(2+) serves as cofactor.

It carries out the reaction (2E)-3-methyl-5-phosphooxypent-2-enoate + H(+) = isopentenyl phosphate + CO2. The protein operates within isoprenoid biosynthesis; isopentenyl diphosphate biosynthesis via mevalonate pathway. In terms of biological role, catalyzes the conversion of trans-anhydromevalonate 5-phosphate (tAHMP) into isopentenyl phosphate. Involved in the archaeal mevalonate (MVA) pathway, which provides fundamental precursors for isoprenoid biosynthesis, such as isopentenyl diphosphate (IPP) and dimethylallyl diphosphate (DMAPP). The sequence is that of Anhydromevalonate phosphate decarboxylase from Methanocaldococcus jannaschii (strain ATCC 43067 / DSM 2661 / JAL-1 / JCM 10045 / NBRC 100440) (Methanococcus jannaschii).